Here is a 729-residue protein sequence, read N- to C-terminus: Phosphoribosylformylglycinamidine synthase subunit PurL (729 aa).

Histidine 54 is an active-site residue. Residues tyrosine 57 and lysine 96 each coordinate ATP. Glutamate 98 serves as a coordination point for Mg(2+). Substrate is bound by residues 99–102 (SHNH) and arginine 121. Catalysis depends on histidine 100, which acts as the Proton acceptor. Aspartate 122 lines the Mg(2+) pocket. A substrate-binding site is contributed by glutamine 245. A Mg(2+)-binding site is contributed by aspartate 273. 317–319 (ETQ) contacts substrate. Aspartate 495 and glycine 532 together coordinate ATP. Asparagine 533 contributes to the Mg(2+) binding site. Serine 535 lines the substrate pocket.

It belongs to the FGAMS family. As to quaternary structure, monomer. Part of the FGAM synthase complex composed of 1 PurL, 1 PurQ and 2 PurS subunits.

It localises to the cytoplasm. It catalyses the reaction N(2)-formyl-N(1)-(5-phospho-beta-D-ribosyl)glycinamide + L-glutamine + ATP + H2O = 2-formamido-N(1)-(5-O-phospho-beta-D-ribosyl)acetamidine + L-glutamate + ADP + phosphate + H(+). It functions in the pathway purine metabolism; IMP biosynthesis via de novo pathway; 5-amino-1-(5-phospho-D-ribosyl)imidazole from N(2)-formyl-N(1)-(5-phospho-D-ribosyl)glycinamide: step 1/2. Part of the phosphoribosylformylglycinamidine synthase complex involved in the purines biosynthetic pathway. Catalyzes the ATP-dependent conversion of formylglycinamide ribonucleotide (FGAR) and glutamine to yield formylglycinamidine ribonucleotide (FGAM) and glutamate. The FGAM synthase complex is composed of three subunits. PurQ produces an ammonia molecule by converting glutamine to glutamate. PurL transfers the ammonia molecule to FGAR to form FGAM in an ATP-dependent manner. PurS interacts with PurQ and PurL and is thought to assist in the transfer of the ammonia molecule from PurQ to PurL. This Staphylococcus aureus (strain Mu3 / ATCC 700698) protein is Phosphoribosylformylglycinamidine synthase subunit PurL.